We begin with the raw amino-acid sequence, 81 residues long: Elsinochrome C biosynthesis cluster protein SNOG_08613 (81 aa).

In terms of biological role, part of the gene cluster that mediates the biosynthesis of elsinochrome C, a perelyenequinone phytotoxin structurally similar to cercosporin. The first step of elsinochrome C biosynthesis is performed by the polyketide synthase elcA which catalyzes the formation of nor-toralactone. The starter unit acyltransferase (SAT) domain of elcA initiates polyketide extension by the selective utilization of acetyl-CoA, which is elongated to the heptaketide in the beta-ketoacyl synthase (KS) domain by successive condensations with six malonyl units introduced by the malonyl acyltransferase (MAT) domain. The product template (PT) domain catalyzes C4-C9 and C2-C11 aldol cyclizations and dehydrations to a trihydroxynaphthalene, which is thought to be delivered to the thioesterase (TE) domain for product release. The bifunctional enzyme elcB then methylates nor-toralactone to toralactone before conducting an unusual oxidative aromatic ring opening. The next step in perylenequinone biosynthesis is an O-methylation at the nascent OH-6 of the elcB product performed by the O-methyltransferase elcD. The oxidative coupling of the two monomeric naphthol units in perylenequinone biosynthesis is catalyzed by the FAD-dependent monooxygenase elcE and the multicopper oxidase elcG. ElcG might catalyze the first intermolecular coupling in a regio- and stereo-selective manner via a phenol radical coupling mechanism and the elcE could forge the second C-C bond intramolecularly via a hydride transfer mechanism. The fasciclin domain-containing protein elcF might also play a role duting this step. The last piece of the puzzle in the biosynthesis of elsinochrome C is the additional annulation by enolate coupling to afford the dihydrobenzo(ghi)perylenequinone system, catalyzed by the FAD-dependent monooxygenase elcH. In Phaeosphaeria nodorum (strain SN15 / ATCC MYA-4574 / FGSC 10173) (Glume blotch fungus), this protein is Elsinochrome C biosynthesis cluster protein SNOG_08613.